A 183-amino-acid chain; its full sequence is NAD(P)H-quinone oxidoreductase subunit J (183 aa).

Residues 1 to 21 (MAEENAQEKQAPPSAGEQSEP) form a disordered region.

The protein belongs to the complex I 30 kDa subunit family. As to quaternary structure, NDH-1 can be composed of about 15 different subunits; different subcomplexes with different compositions have been identified which probably have different functions.

It is found in the cellular thylakoid membrane. The enzyme catalyses a plastoquinone + NADH + (n+1) H(+)(in) = a plastoquinol + NAD(+) + n H(+)(out). The catalysed reaction is a plastoquinone + NADPH + (n+1) H(+)(in) = a plastoquinol + NADP(+) + n H(+)(out). NDH-1 shuttles electrons from an unknown electron donor, via FMN and iron-sulfur (Fe-S) centers, to quinones in the respiratory and/or the photosynthetic chain. The immediate electron acceptor for the enzyme in this species is believed to be plastoquinone. Couples the redox reaction to proton translocation, and thus conserves the redox energy in a proton gradient. Cyanobacterial NDH-1 also plays a role in inorganic carbon-concentration. This is NAD(P)H-quinone oxidoreductase subunit J from Synechococcus sp. (strain JA-2-3B'a(2-13)) (Cyanobacteria bacterium Yellowstone B-Prime).